The following is a 63-amino-acid chain: DNA gyrase inhibitor YacG (63 aa).

Zn(2+) is bound by residues Cys-9, Cys-12, Cys-28, and Cys-32.

The protein belongs to the DNA gyrase inhibitor YacG family. Interacts with GyrB. It depends on Zn(2+) as a cofactor.

Inhibits all the catalytic activities of DNA gyrase by preventing its interaction with DNA. Acts by binding directly to the C-terminal domain of GyrB, which probably disrupts DNA binding by the gyrase. The sequence is that of DNA gyrase inhibitor YacG from Salmonella choleraesuis (strain SC-B67).